The chain runs to 441 residues: Ribulose bisphosphate carboxylase (441 aa).

Lys-160 serves as the catalytic Proton acceptor. Lys-162 serves as a coordination point for substrate. The Mg(2+) site is built by Lys-186, Asp-188, and Glu-189. Lys-186 carries the N6-carboxylysine modification. The active-site Proton acceptor is His-278. Residues Arg-279, His-311, 364-366 (SGG), and 386-389 (QVGG) contribute to the substrate site.

Belongs to the RuBisCO large chain family. Type III subfamily. In terms of assembly, homodimer. In contrast to form I RuBisCO, the form III RuBisCO is composed solely of large subunits. Mg(2+) serves as cofactor.

The catalysed reaction is 2 (2R)-3-phosphoglycerate + 2 H(+) = D-ribulose 1,5-bisphosphate + CO2 + H2O. It carries out the reaction D-ribulose 1,5-bisphosphate + O2 = 2-phosphoglycolate + (2R)-3-phosphoglycerate + 2 H(+). Reversibly inhibited by O(2). Its function is as follows. Catalyzes the addition of molecular CO(2) and H(2)O to ribulose 1,5-bisphosphate (RuBP), generating two molecules of 3-phosphoglycerate (3-PGA). Functions in an archaeal AMP degradation pathway, together with AMP phosphorylase and R15P isomerase. The polypeptide is Ribulose bisphosphate carboxylase (Archaeoglobus fulgidus (strain ATCC 49558 / DSM 4304 / JCM 9628 / NBRC 100126 / VC-16)).